The following is a 587-amino-acid chain: Proline-rich protein 14 (587 aa).

M1 bears the N-acetylmethionine mark. The segment covering 1–11 (MDLPGDSSTPG) has biased composition (polar residues). Disordered regions lie at residues 1–48 (MDLP…EKAS), 65–152 (VPLE…HQPT), and 181–241 (ARRA…RPRL). Residues 1–135 (MDLPGDSSTP…TPRRQSRTTP (135 aa)) are sufficient for heterochromatin association in interphase and chromatin association in anaphase. The interval 85–378 (SVRSQPPASP…MAKAPPPPRP (294 aa)) is required for the interaction with GRB2 and sufficient to promote the phosphorylation of AKT and cell proliferation. The segment at 136 to 365 (GPDEGPSQKV…RPRPRRHTVG (230 aa)) is required for nuclear lamina association. The span at 200-214 (LPAPSRPSALSANPL) shows a compositional bias: low complexity. Pro residues predominate over residues 215-234 (ASPPPAPDPVLEPPSTPPPS). S277 carries the post-translational modification Phosphoserine. Disordered stretches follow at residues 290-444 (EAGQ…IGKV) and 524-587 (FRDS…PHRT). The segment covering 314–325 (AQDQNPSATLTK) has biased composition (polar residues). Pro residues predominate over residues 337-356 (LGPPGPDPCSWPPVPAPSSR). Positions 398-410 (TSCSSTASTSSFS) are enriched in low complexity. Residues 519-536 (RRTVEFRDSSLPRSRRPS) are required for nuclear localization. Low complexity predominate over residues 538-548 (GARATAGRTLP). The segment covering 572–581 (LLEEEEEGDQ) has biased composition (acidic residues).

Interacts (via proline-rich region) with GRB2 (via SH3 domain 2). Interacts (via N-terminus) with CBX5.

It localises to the chromosome. It is found in the nucleus. Its subcellular location is the nucleus lamina. The protein localises to the nucleoplasm. In terms of biological role, functions in tethering peripheral heterochromatin to the nuclear lamina during interphase, possibly through the interaction with heterochromatin protein CBX5/HP1 alpha. Might play a role in reattaching heterochromatin to the nuclear lamina at mitotic exit. Promotes myoblast differentiation during skeletal myogenesis, possibly by stimulating transcription factor MyoD activity via binding to CBX5/HP1 alpha. Involved in the positive regulation of the PI3K-Akt-mTOR signaling pathway and in promoting cell proliferation, possibly via binding to GRB2. The sequence is that of Proline-rich protein 14 (PRR14) from Bos taurus (Bovine).